The primary structure comprises 509 residues: Dol-P-Glc:Glc(2)Man(9)GlcNAc(2)-PP-Dol alpha-1,2-glucosyltransferase (509 aa).

Over methionine 1–leucine 4 the chain is Cytoplasmic. A helical membrane pass occupies residues alanine 5–valine 25. Residues proline 26–proline 57 lie on the Lumenal side of the membrane. Residues proline 58–methionine 78 form a helical membrane-spanning segment. Over glutamate 79 to alanine 99 the chain is Cytoplasmic. The chain crosses the membrane as a helical span at residues valine 100 to leucine 120. Residues serine 121–lysine 124 lie on the Lumenal side of the membrane. Residues alanine 125 to tyrosine 145 form a helical membrane-spanning segment. Over tyrosine 146–serine 170 the chain is Cytoplasmic. Residues alanine 171–valine 191 traverse the membrane as a helical segment. Topologically, residues alanine 192–proline 285 are lumenal. The tract at residues glutamine 210–serine 254 is disordered. 2 stretches are compositionally biased toward polar residues: residues glutamate 215–serine 229 and serine 239–serine 254. The helical transmembrane segment at phenylalanine 286–glycine 306 threads the bilayer. Over alanine 307–histidine 311 the chain is Cytoplasmic. A helical membrane pass occupies residues valine 312–alanine 332. The Lumenal segment spans residues proline 333–serine 355. Asparagine 351 carries N-linked (GlcNAc...) asparagine glycosylation. Residues leucine 356 to alanine 376 traverse the membrane as a helical segment. The Cytoplasmic portion of the chain corresponds to histidine 377 to tryptophan 400. Residues leucine 401–leucine 421 traverse the membrane as a helical segment. Topologically, residues alanine 422–threonine 428 are lumenal. The chain crosses the membrane as a helical span at residues tryptophan 429–phenylalanine 449. At arginine 450–threonine 472 the chain is on the cytoplasmic side. The helical transmembrane segment at tryptophan 473–phenylalanine 493 threads the bilayer. Residues arginine 494–tryptophan 509 lie on the Lumenal side of the membrane.

Belongs to the ALG10 glucosyltransferase family.

It localises to the endoplasmic reticulum membrane. It catalyses the reaction an alpha-D-Glc-(1-&gt;3)-alpha-D-Glc-(1-&gt;3)-alpha-D-Man-(1-&gt;2)-alpha-D-Man-(1-&gt;2)-alpha-D-Man-(1-&gt;3)-[alpha-D-Man-(1-&gt;2)-alpha-D-Man-(1-&gt;3)-[alpha-D-Man-(1-&gt;2)-alpha-D-Man-(1-&gt;6)]-alpha-D-Man-(1-&gt;6)]-beta-D-Man-(1-&gt;4)-beta-D-GlcNAc-(1-&gt;4)-alpha-D-GlcNAc-diphospho-di-trans,poly-cis-dolichol + a di-trans,poly-cis-dolichyl beta-D-glucosyl phosphate = a alpha-D-Glc-(1-&gt;2)-alpha-D-Glc-(1-&gt;3)-alpha-D-Glc-(1-&gt;3)-alpha-D-Man-(1-&gt;2)-alpha-D-Man-(1-&gt;2)-alpha-D-Man-(1-&gt;3)-[alpha-D-Man-(1-&gt;2)-alpha-D-Man-(1-&gt;3)-[alpha-D-Man-(1-&gt;2)-alpha-D-Man-(1-&gt;6)]-alpha-D-Man-(1-&gt;6)]-beta-D-Man-(1-&gt;4)-beta-D-GlcNAc-(1-&gt;4)-alpha-D-GlcNAc-diphospho-di-trans,poly-cis-dolichol + a di-trans,poly-cis-dolichyl phosphate + H(+). It functions in the pathway protein modification; protein glycosylation. In terms of biological role, dol-P-Glc:Glc(2)Man(9)GlcNAc(2)-PP-Dol alpha-1,2-glucosyltransferase that operates in the biosynthetic pathway of dolichol-linked oligosaccharides, the glycan precursors employed in protein asparagine (N)-glycosylation. The assembly of dolichol-linked oligosaccharides begins on the cytosolic side of the endoplasmic reticulum membrane and finishes in its lumen. The sequential addition of sugars to dolichol pyrophosphate produces dolichol-linked oligosaccharides containing fourteen sugars, including two GlcNAcs, nine mannoses and three glucoses. Once assembled, the oligosaccharide is transferred from the lipid to nascent proteins by oligosaccharyltransferases. In the lumen of the endoplasmic reticulum, adds the third and last glucose residue from dolichyl phosphate glucose (Dol-P-Glc) onto the lipid-linked oligosaccharide intermediate Glc(2)Man(9)GlcNAc(2)-PP-Dol to produce Glc(3)Man(9)GlcNAc(2)-PP-Dol. The sequence is that of Dol-P-Glc:Glc(2)Man(9)GlcNAc(2)-PP-Dol alpha-1,2-glucosyltransferase from Arabidopsis thaliana (Mouse-ear cress).